A 123-amino-acid polypeptide reads, in one-letter code: Large ribosomal subunit protein eL8 (123 aa).

Belongs to the eukaryotic ribosomal protein eL8 family. As to quaternary structure, may be present in up to 3 copies per 70S ribosome. Part of the 50S ribosomal subunit, where it binds 23S rRNA at its canonical site near the L1 stalk, as well as a possible second 50S binding site near helix 25 and a possible third site on the beak of the 30S subunit. Component of box C/D small ribonucleoprotein (sRNP) particles that contain rpl7ae, FlpA and nop5, plus a guide RNA. These sRNP particles form homodimers, giving rise to an asymmetric holoenzyme. Probably part of the RNase P complex.

The protein localises to the cytoplasm. Multifunctional RNA-binding protein that recognizes the K-turn motif in ribosomal RNA, the RNA component of RNase P, box H/ACA, box C/D and box C'/D' sRNAs. Component of the 70S ribosome. Component of a box C/D small ribonucleoprotein (sRNP) particle that is involved in pre-rRNA and tRNA processing. Utilizes the methyl donor S-adenosyl-L-methionine to catalyze the site-specific 2'-hydroxyl methylation of ribose moieties in rRNA and tRNA. Site specificity is provided by a guide RNA that base pairs with the substrate. Methylation occurs at a characteristic distance from the sequence involved in base pairing with the guide RNA. This is Large ribosomal subunit protein eL8 from Pyrococcus furiosus (strain ATCC 43587 / DSM 3638 / JCM 8422 / Vc1).